Consider the following 394-residue polypeptide: Obg-like ATPase 1 (394 aa).

The OBG-type G domain maps to 25 to 282 (LKIGIVGLPN…MPPDEAAKYC (258 aa)). ATP is bound by residues 34–39 (NVGKST), 56–60 (FCTID), and 94–97 (DIAG). The Mg(2+) site is built by Ser-38 and Thr-58. Phe-129 is a binding site for GTP. ATP-binding positions include 230-231 (NM), Met-231, and 263-265 (SCA). 263 to 265 (SCA) contacts GTP. The region spanning 303 to 386 (HLIYFFTAGP…QDADIIFFKF (84 aa)) is the TGS domain.

The protein belongs to the TRAFAC class OBG-HflX-like GTPase superfamily. OBG GTPase family. YchF/OLA1 subfamily. Monomer (Potential). Interacts with GAP1. The cofactor is Mg(2+).

It is found in the cytoplasm. It localises to the cell membrane. The protein resides in the cytosol. Its activity is regulated as follows. Activated by GAP1. Its function is as follows. Hydrolyzes ATP, and can also hydrolyze GTP with lower efficiency. Has lower affinity for GTP (Potential). Exhibits GTPase activity. Exhibits similar binding affinities and hydrolytic activities toward both GTP and ATP. Binds to the 26 S ribosomal RNA in vitro, but not to the 5.8 S or 18 S rRNA. Confers sensitivity to salinity stress by suppressing the anti-oxidation enzymatic activities and increasing lipid peroxidation thus leading to the accumulation of reactive oxygen species (ROS). The chain is Obg-like ATPase 1 from Oryza sativa subsp. indica (Rice).